The following is a 298-amino-acid chain: O-glycoside alpha-1,2-mannosyltransferase homolog 6 (298 aa).

E220 functions as the Nucleophile in the catalytic mechanism.

It belongs to the glycosyltransferase 15 family.

The protein localises to the cytoplasm. It localises to the nucleus. Functionally, probable mannosyltransferase involved in O-glycosylation of cell wall and secreted proteins. In Schizosaccharomyces pombe (strain 972 / ATCC 24843) (Fission yeast), this protein is O-glycoside alpha-1,2-mannosyltransferase homolog 6 (omh6).